The chain runs to 215 residues: A-type ATP synthase subunit E (215 aa).

Belongs to the V-ATPase E subunit family. Has multiple subunits with at least A(3), B(3), C, D, E, F, H, I and proteolipid K(x).

It localises to the cell membrane. Its function is as follows. Component of the A-type ATP synthase that produces ATP from ADP in the presence of a proton gradient across the membrane. The chain is A-type ATP synthase subunit E from Thermofilum pendens (strain DSM 2475 / Hrk 5).